A 319-amino-acid chain; its full sequence is MVSEYKKAGVDLNKLKEYHTLALNTFQNSGVLKIGHYANAIKLDDKYLAMHVDGVGTKTILALKTGIIEPTGIDCIAMNVNDLVCIGARPLAGVDYLALEKPMDDVVEKVMKGLKQGADEANIEIIGGETAIMPGVITGYDLSCSVIGISDRLKTGEDVAPGDVILGLKSNGVHSNGYSLIRKLIDEGKLSLNDWGEELMRPTRIYSSSIIPILDKIKALAHITGGAFSKLKRITNYRINLKMPDPPEVFKAIENAGVPHFEMYKIFNMGIGMIIFVSKDLKDDIIEFLSKKETVYELGYVEKGEGIKITTYKNEILYI.

Belongs to the AIR synthase family.

It localises to the cytoplasm. The catalysed reaction is 2-formamido-N(1)-(5-O-phospho-beta-D-ribosyl)acetamidine + ATP = 5-amino-1-(5-phospho-beta-D-ribosyl)imidazole + ADP + phosphate + H(+). It functions in the pathway purine metabolism; IMP biosynthesis via de novo pathway; 5-amino-1-(5-phospho-D-ribosyl)imidazole from N(2)-formyl-N(1)-(5-phospho-D-ribosyl)glycinamide: step 2/2. This is Phosphoribosylformylglycinamidine cyclo-ligase from Sulfurisphaera tokodaii (strain DSM 16993 / JCM 10545 / NBRC 100140 / 7) (Sulfolobus tokodaii).